A 377-amino-acid polypeptide reads, in one-letter code: Nitric oxide reductase FlRd-NAD(+) reductase (377 aa).

The protein belongs to the FAD-dependent oxidoreductase family. It depends on FAD as a cofactor.

The protein resides in the cytoplasm. It catalyses the reaction 2 reduced [nitric oxide reductase rubredoxin domain] + NAD(+) + H(+) = 2 oxidized [nitric oxide reductase rubredoxin domain] + NADH. The protein operates within nitrogen metabolism; nitric oxide reduction. Its function is as follows. One of at least two accessory proteins for anaerobic nitric oxide (NO) reductase. Reduces the rubredoxin moiety of NO reductase. The chain is Nitric oxide reductase FlRd-NAD(+) reductase from Salmonella arizonae (strain ATCC BAA-731 / CDC346-86 / RSK2980).